Reading from the N-terminus, the 524-residue chain is Ribosomal protein uS12 methylthiotransferase RimO (524 aa).

Residues 20-31 show a composition bias toward polar residues; sequence NSQTASDSTQPA. Residues 20 to 59 are disordered; that stretch reads NSQTASDSTQPAASAYHHKANHNQNRSIEQSAQQAAEQSL. A compositionally biased stretch (low complexity) spans 48 to 58; it reads EQSAQQAAEQS. One can recognise an MTTase N-terminal domain in the interval 67–177; sequence PKVGFVSLGC…VITAVSTHAP (111 aa). Residues cysteine 76, cysteine 112, cysteine 141, cysteine 216, cysteine 220, and cysteine 223 each contribute to the [4Fe-4S] cluster site. The 242-residue stretch at 202 to 443 folds into the Radical SAM core domain; it reads LTPSHYAYLK…MAVQQQISEQ (242 aa). The region spanning 446 to 519 is the TRAM domain; the sequence is QEKVGKTMTV…EYDLFASYDA (74 aa).

This sequence belongs to the methylthiotransferase family. RimO subfamily. [4Fe-4S] cluster is required as a cofactor.

Its subcellular location is the cytoplasm. It catalyses the reaction L-aspartate(89)-[ribosomal protein uS12]-hydrogen + (sulfur carrier)-SH + AH2 + 2 S-adenosyl-L-methionine = 3-methylsulfanyl-L-aspartate(89)-[ribosomal protein uS12]-hydrogen + (sulfur carrier)-H + 5'-deoxyadenosine + L-methionine + A + S-adenosyl-L-homocysteine + 2 H(+). In terms of biological role, catalyzes the methylthiolation of an aspartic acid residue of ribosomal protein uS12. The chain is Ribosomal protein uS12 methylthiotransferase RimO from Psychrobacter sp. (strain PRwf-1).